The following is a 222-amino-acid chain: MLDQIKNSLIVSCQALPDEPLHSSFIMSKMALAAKQGGAKGIRANTKEDIIQIKEEVNLPVVGIVKRDYKDSEVFITATYKEIDELLESNCEMIAIDATTRNRPQDIKLQDLVDYTKRLNSEVELMADIATLEEAKIAEKLGFDCISTTLHGYTSNTSNHKIYDNDFSFLKNLLSEVKIPIIAEGNILTPEMFKRCIELGAHACVVGGAITRPQEITKRFIG.

Belongs to the NanE family.

It catalyses the reaction an N-acyl-D-glucosamine 6-phosphate = an N-acyl-D-mannosamine 6-phosphate. The protein operates within amino-sugar metabolism; N-acetylneuraminate degradation; D-fructose 6-phosphate from N-acetylneuraminate: step 3/5. Functionally, converts N-acetylmannosamine-6-phosphate (ManNAc-6-P) to N-acetylglucosamine-6-phosphate (GlcNAc-6-P). The sequence is that of Putative N-acetylmannosamine-6-phosphate 2-epimerase from Oceanobacillus iheyensis (strain DSM 14371 / CIP 107618 / JCM 11309 / KCTC 3954 / HTE831).